A 311-amino-acid chain; its full sequence is HPr kinase/phosphorylase (311 aa).

Residues His136 and Lys157 contribute to the active site. 151–158 (GDSGIGKS) lines the ATP pocket. Mg(2+) is bound at residue Ser158. Residue Asp175 is the Proton acceptor; for phosphorylation activity. Proton donor; for dephosphorylation activity of the active site. Residues 199–208 (LEIRGLGIIN) are important for the catalytic mechanism of both phosphorylation and dephosphorylation. Glu200 serves as a coordination point for Mg(2+). Residue Arg241 is part of the active site. Positions 262–267 (PVRPGR) are important for the catalytic mechanism of dephosphorylation.

Belongs to the HPrK/P family. As to quaternary structure, homohexamer. Requires Mg(2+) as cofactor.

It catalyses the reaction [HPr protein]-L-serine + ATP = [HPr protein]-O-phospho-L-serine + ADP + H(+). The enzyme catalyses [HPr protein]-O-phospho-L-serine + phosphate + H(+) = [HPr protein]-L-serine + diphosphate. In terms of biological role, catalyzes the ATP- as well as the pyrophosphate-dependent phosphorylation of a specific serine residue in HPr, a phosphocarrier protein of the phosphoenolpyruvate-dependent sugar phosphotransferase system (PTS). HprK/P also catalyzes the pyrophosphate-producing, inorganic phosphate-dependent dephosphorylation (phosphorolysis) of seryl-phosphorylated HPr (P-Ser-HPr). The two antagonistic activities of HprK/P are regulated by several intracellular metabolites, which change their concentration in response to the absence or presence of rapidly metabolisable carbon sources (glucose, fructose, etc.) in the growth medium. Therefore, by controlling the phosphorylation state of HPr, HPrK/P is a sensor enzyme that plays a major role in the regulation of carbon metabolism and sugar transport: it mediates carbon catabolite repression (CCR), and regulates PTS-catalyzed carbohydrate uptake and inducer exclusion. The sequence is that of HPr kinase/phosphorylase from Staphylococcus haemolyticus (strain JCSC1435).